Reading from the N-terminus, the 461-residue chain is Glutamyl-tRNA reductase (461 aa).

Substrate is bound by residues T50 to R53, S111, E116 to Q118, and Q122. C51 (nucleophile) is an active-site residue. G191 to A196 contacts NADP(+).

It belongs to the glutamyl-tRNA reductase family. As to quaternary structure, homodimer.

It catalyses the reaction (S)-4-amino-5-oxopentanoate + tRNA(Glu) + NADP(+) = L-glutamyl-tRNA(Glu) + NADPH + H(+). It participates in porphyrin-containing compound metabolism; protoporphyrin-IX biosynthesis; 5-aminolevulinate from L-glutamyl-tRNA(Glu): step 1/2. In terms of biological role, catalyzes the NADPH-dependent reduction of glutamyl-tRNA(Glu) to glutamate 1-semialdehyde (GSA). The protein is Glutamyl-tRNA reductase of Syntrophobacter fumaroxidans (strain DSM 10017 / MPOB).